Reading from the N-terminus, the 340-residue chain is UDP-3-O-(3-hydroxymyristoyl)glucosamine N-acyltransferase (340 aa).

Catalysis depends on His239, which acts as the Proton acceptor.

It belongs to the transferase hexapeptide repeat family. LpxD subfamily. In terms of assembly, homotrimer.

It carries out the reaction a UDP-3-O-[(3R)-3-hydroxyacyl]-alpha-D-glucosamine + a (3R)-hydroxyacyl-[ACP] = a UDP-2-N,3-O-bis[(3R)-3-hydroxyacyl]-alpha-D-glucosamine + holo-[ACP] + H(+). The catalysed reaction is UDP-3-O-[(3R)-3-hydroxytetradecanoyl]-alpha-D-glucosamine + (3R)-hydroxytetradecanoyl-[ACP] = UDP-2-N,3-O-bis[(3R)-3-hydroxytetradecanoyl]-alpha-D-glucosamine + holo-[ACP] + H(+). It functions in the pathway glycolipid biosynthesis; lipid IV(A) biosynthesis; lipid IV(A) from (3R)-3-hydroxytetradecanoyl-[acyl-carrier-protein] and UDP-N-acetyl-alpha-D-glucosamine: step 3/6. In terms of biological role, catalyzes the N-acylation of UDP-3-O-(hydroxytetradecanoyl)glucosamine using 3-hydroxytetradecanoyl-ACP as the acyl donor. Is involved in the biosynthesis of lipid A, a phosphorylated glycolipid that anchors the lipopolysaccharide to the outer membrane of the cell. The polypeptide is UDP-3-O-(3-hydroxymyristoyl)glucosamine N-acyltransferase (Sodalis glossinidius (strain morsitans)).